The following is a 102-amino-acid chain: Small ribosomal subunit protein uS10 (102 aa).

It belongs to the universal ribosomal protein uS10 family. In terms of assembly, part of the 30S ribosomal subunit.

In terms of biological role, involved in the binding of tRNA to the ribosomes. The polypeptide is Small ribosomal subunit protein uS10 (Rhizobium meliloti (strain 1021) (Ensifer meliloti)).